The following is a 556-amino-acid chain: Formate--tetrahydrofolate ligase (556 aa).

65–72 (TPAGEGKT) provides a ligand contact to ATP.

Belongs to the formate--tetrahydrofolate ligase family.

It carries out the reaction (6S)-5,6,7,8-tetrahydrofolate + formate + ATP = (6R)-10-formyltetrahydrofolate + ADP + phosphate. Its pathway is one-carbon metabolism; tetrahydrofolate interconversion. The protein is Formate--tetrahydrofolate ligase of Peptoclostridium acidaminophilum (Eubacterium acidaminophilum).